The chain runs to 127 residues: Small ribosomal subunit protein uS11 (127 aa).

The protein belongs to the universal ribosomal protein uS11 family. As to quaternary structure, part of the 30S ribosomal subunit. Interacts with proteins S7 and S18. Binds to IF-3.

Functionally, located on the platform of the 30S subunit, it bridges several disparate RNA helices of the 16S rRNA. Forms part of the Shine-Dalgarno cleft in the 70S ribosome. This chain is Small ribosomal subunit protein uS11, found in Chlorobium limicola (strain DSM 245 / NBRC 103803 / 6330).